The chain runs to 100 residues: Urease subunit gamma (100 aa).

Belongs to the urease gamma subunit family. Heterotrimer of UreA (gamma), UreB (beta) and UreC (alpha) subunits. Three heterotrimers associate to form the active enzyme.

Its subcellular location is the cytoplasm. The catalysed reaction is urea + 2 H2O + H(+) = hydrogencarbonate + 2 NH4(+). Its pathway is nitrogen metabolism; urea degradation; CO(2) and NH(3) from urea (urease route): step 1/1. In Flavobacterium johnsoniae (strain ATCC 17061 / DSM 2064 / JCM 8514 / BCRC 14874 / CCUG 350202 / NBRC 14942 / NCIMB 11054 / UW101) (Cytophaga johnsonae), this protein is Urease subunit gamma.